A 426-amino-acid chain; its full sequence is Glutamate-1-semialdehyde 2,1-aminomutase (426 aa).

Residue K265 is modified to N6-(pyridoxal phosphate)lysine.

This sequence belongs to the class-III pyridoxal-phosphate-dependent aminotransferase family. HemL subfamily. Homodimer. Pyridoxal 5'-phosphate is required as a cofactor.

The protein resides in the cytoplasm. It carries out the reaction (S)-4-amino-5-oxopentanoate = 5-aminolevulinate. It participates in porphyrin-containing compound metabolism; protoporphyrin-IX biosynthesis; 5-aminolevulinate from L-glutamyl-tRNA(Glu): step 2/2. This is Glutamate-1-semialdehyde 2,1-aminomutase from Salmonella arizonae (strain ATCC BAA-731 / CDC346-86 / RSK2980).